The chain runs to 393 residues: Elongation factor Tu (393 aa).

In terms of domain architecture, tr-type G spans 10-203; that stretch reads KPHVNIGTIG…AVDDYIPEPV (194 aa). The segment at 19-26 is G1; that stretch reads GHVDHGKT. A GTP-binding site is contributed by 19–26; it reads GHVDHGKT. Thr26 is a Mg(2+) binding site. Residues 60 to 64 form a G2 region; that stretch reads GITIS. The tract at residues 81 to 84 is G3; it reads DCPG. GTP-binding positions include 81-85 and 136-139; these read DCPGH and NKVD. Residues 136 to 139 form a G4 region; that stretch reads NKVD. Positions 173–175 are G5; that stretch reads SAL.

The protein belongs to the TRAFAC class translation factor GTPase superfamily. Classic translation factor GTPase family. EF-Tu/EF-1A subfamily. As to quaternary structure, monomer.

It is found in the cytoplasm. It catalyses the reaction GTP + H2O = GDP + phosphate + H(+). In terms of biological role, GTP hydrolase that promotes the GTP-dependent binding of aminoacyl-tRNA to the A-site of ribosomes during protein biosynthesis. This Chlorobaculum parvum (strain DSM 263 / NCIMB 8327) (Chlorobium vibrioforme subsp. thiosulfatophilum) protein is Elongation factor Tu.